A 488-amino-acid polypeptide reads, in one-letter code: (Z)-2-((N-methylformamido)methylene)-5-hydroxybutyrolactone dehydrogenase (488 aa).

Residues 149–150 and 226–227 each bind NAD(+); these read WN and GG. The active-site Proton acceptor is the glutamate 248. Leucine 249 contacts NAD(+). Cysteine 282 (nucleophile) is an active-site residue. Glutamate 380 contacts NAD(+).

This sequence belongs to the aldehyde dehydrogenase family. As to quaternary structure, homodimer.

It carries out the reaction (Z)-2-((N-methylformamido)methylene)-5-hydroxybutanolactone + NAD(+) + H2O = (E)-2-((N-methylformamido) methylene)succinate + NADH + 3 H(+). In terms of biological role, involved in the degradation of the pyridine ring of trigonelline (TG; N-methylnicotinate) into succinate and methylamine as carbon and nitrogen sources, respectively. Catalyzes the NAD(+)-dependent oxidation of (Z)-2-((N-methylformamido)methylene)-5-hydroxybutyrolactone (MFMB) to yield (E)-2-((N-methylformamido)methylene)succinate (MFMS). This is (Z)-2-((N-methylformamido)methylene)-5-hydroxybutyrolactone dehydrogenase from Acinetobacter baylyi (strain ATCC 33305 / BD413 / ADP1).